Consider the following 64-residue polypeptide: Large ribosomal subunit protein eL37 (64 aa).

The segment at 1–6 (GRCSAC) adopts a C4-type zinc-finger fold. 2 residues coordinate Zn(2+): Cys-3 and Cys-6.

This sequence belongs to the eukaryotic ribosomal protein eL37 family. Zn(2+) is required as a cofactor.

Its function is as follows. Binds to the 23S rRNA. The sequence is that of Large ribosomal subunit protein eL37 (RPL37) from Solanum lycopersicum (Tomato).